Consider the following 466-residue polypeptide: 3-isopropylmalate dehydratase large subunit (466 aa).

[4Fe-4S] cluster contacts are provided by Cys-347, Cys-407, and Cys-410.

The protein belongs to the aconitase/IPM isomerase family. LeuC type 1 subfamily. Heterodimer of LeuC and LeuD. Requires [4Fe-4S] cluster as cofactor.

It carries out the reaction (2R,3S)-3-isopropylmalate = (2S)-2-isopropylmalate. Its pathway is amino-acid biosynthesis; L-leucine biosynthesis; L-leucine from 3-methyl-2-oxobutanoate: step 2/4. Its function is as follows. Catalyzes the isomerization between 2-isopropylmalate and 3-isopropylmalate, via the formation of 2-isopropylmaleate. In Buchnera aphidicola subsp. Diuraphis noxia, this protein is 3-isopropylmalate dehydratase large subunit.